A 617-amino-acid polypeptide reads, in one-letter code: Translation initiation factor IF-2 (617 aa).

The segment covering 1-11 (MSKHKPRHFQK) has biased composition (basic residues). A disordered region spans residues 1–25 (MSKHKPRHFQKNKFDNRAKTSAKQQ). Positions 119–288 (PRPPIVTIMG…ILLVAEVEDY (170 aa)) constitute a tr-type G domain. The tract at residues 128 to 135 (GHVDHGKT) is G1. A GTP-binding site is contributed by 128 to 135 (GHVDHGKT). Positions 153-157 (GITQK) are G2. The segment at 175–178 (DTPG) is G3. GTP contacts are provided by residues 175 to 179 (DTPGH) and 229 to 232 (NKMD). The interval 229 to 232 (NKMD) is G4. The segment at 265–267 (SAL) is G5.

Belongs to the TRAFAC class translation factor GTPase superfamily. Classic translation factor GTPase family. IF-2 subfamily.

The protein resides in the cytoplasm. In terms of biological role, one of the essential components for the initiation of protein synthesis. Protects formylmethionyl-tRNA from spontaneous hydrolysis and promotes its binding to the 30S ribosomal subunits. Also involved in the hydrolysis of GTP during the formation of the 70S ribosomal complex. The chain is Translation initiation factor IF-2 (infB) from Mycoplasma pneumoniae (strain ATCC 29342 / M129 / Subtype 1) (Mycoplasmoides pneumoniae).